Here is a 150-residue protein sequence, read N- to C-terminus: Deoxyuridine 5'-triphosphate nucleotidohydrolase (150 aa).

Substrate contacts are provided by residues 69–71 (RSG), asparagine 82, and 86–88 (LID).

This sequence belongs to the dUTPase family. The cofactor is Mg(2+).

It carries out the reaction dUTP + H2O = dUMP + diphosphate + H(+). It participates in pyrimidine metabolism; dUMP biosynthesis; dUMP from dCTP (dUTP route): step 2/2. Its function is as follows. This enzyme is involved in nucleotide metabolism: it produces dUMP, the immediate precursor of thymidine nucleotides and it decreases the intracellular concentration of dUTP so that uracil cannot be incorporated into DNA. The polypeptide is Deoxyuridine 5'-triphosphate nucleotidohydrolase (Methylobacillus flagellatus (strain ATCC 51484 / DSM 6875 / VKM B-1610 / KT)).